We begin with the raw amino-acid sequence, 179 residues long: Large ribosomal subunit protein uL10 (179 aa).

This sequence belongs to the universal ribosomal protein uL10 family. In terms of assembly, part of the ribosomal stalk of the 50S ribosomal subunit. The N-terminus interacts with L11 and the large rRNA to form the base of the stalk. The C-terminus forms an elongated spine to which L12 dimers bind in a sequential fashion forming a multimeric L10(L12)X complex.

Forms part of the ribosomal stalk, playing a central role in the interaction of the ribosome with GTP-bound translation factors. In Mycolicibacterium vanbaalenii (strain DSM 7251 / JCM 13017 / BCRC 16820 / KCTC 9966 / NRRL B-24157 / PYR-1) (Mycobacterium vanbaalenii), this protein is Large ribosomal subunit protein uL10.